Reading from the N-terminus, the 221-residue chain is Pyridoxine/pyridoxamine 5'-phosphate oxidase (221 aa).

A disordered region spans residues 1–21 (MDYSDPAELRESYDGAPLDPR). Residues 10 to 13 (RESY) and Lys-68 contribute to the substrate site. FMN-binding positions include 63–68 (RTVLLK), 78–79 (FT), Arg-84, Lys-85, and Gln-107. Substrate is bound by residues Tyr-125, Arg-129, and Ser-133. Residues 143 to 144 (QS) and Trp-189 contribute to the FMN site. 195–197 (RMH) contributes to the substrate binding site. Arg-199 contributes to the FMN binding site.

It belongs to the pyridoxamine 5'-phosphate oxidase family. In terms of assembly, homodimer. It depends on FMN as a cofactor.

It catalyses the reaction pyridoxamine 5'-phosphate + O2 + H2O = pyridoxal 5'-phosphate + H2O2 + NH4(+). The enzyme catalyses pyridoxine 5'-phosphate + O2 = pyridoxal 5'-phosphate + H2O2. Its pathway is cofactor metabolism; pyridoxal 5'-phosphate salvage; pyridoxal 5'-phosphate from pyridoxamine 5'-phosphate: step 1/1. It functions in the pathway cofactor metabolism; pyridoxal 5'-phosphate salvage; pyridoxal 5'-phosphate from pyridoxine 5'-phosphate: step 1/1. In terms of biological role, catalyzes the oxidation of either pyridoxine 5'-phosphate (PNP) or pyridoxamine 5'-phosphate (PMP) into pyridoxal 5'-phosphate (PLP). The protein is Pyridoxine/pyridoxamine 5'-phosphate oxidase of Thermobifida fusca (strain YX).